A 215-amino-acid polypeptide reads, in one-letter code: Jasmonate monooxygenase ABM (215 aa).

Residues 2 to 90 (FAVIFETRPQ…GVLEDYHLRV (89 aa)) form the ABM domain.

It localises to the endoplasmic reticulum. Its subcellular location is the secreted. It catalyses the reaction jasmonate + NADPH + O2 + H(+) = (1R,2R)-12-hydroxyjasmonate + NADP(+) + H2O. In terms of biological role, monooxygenase that converts the endogenous (and likely the host) jasmonate (JA) to its hydroxylated derivative 12-hydroxyjasmonate (12OH-JA), also known as tuberonic acid, a compound that attenuates or disables jasmonate-based host innate immunity and which is essential for proper initiation and elaboration of the blast disease in rice. ABM, together with a polyketide synthase MGG_04775 and the esterase MGG_04774, share the secondary metabolism gene cluster with ABC transporter ABC3, and therefore may also be involved in the synthesis of other important metabolites such as the ABC3 transporter efflux substrate (ATS) and/or additional polyketides. The sequence is that of Jasmonate monooxygenase ABM from Pyricularia oryzae (strain 70-15 / ATCC MYA-4617 / FGSC 8958) (Rice blast fungus).